The sequence spans 254 residues: tRNA uridine(34) hydroxylase (254 aa).

The Rhodanese domain maps to 123–217 (QDPNVILLDT…YLESIPEGES (95 aa)). Cysteine 177 acts as the Cysteine persulfide intermediate in catalysis.

This sequence belongs to the TrhO family.

It catalyses the reaction uridine(34) in tRNA + AH2 + O2 = 5-hydroxyuridine(34) in tRNA + A + H2O. Functionally, catalyzes oxygen-dependent 5-hydroxyuridine (ho5U) modification at position 34 in tRNAs. This Legionella pneumophila (strain Lens) protein is tRNA uridine(34) hydroxylase.